The primary structure comprises 248 residues: Large ribosomal subunit protein uL30A (248 aa).

A disordered region spans residues 1–44 (MSQKKQKIQVEQKVPENVAKKTQRDSKLRDAVAKRRTERLAANK). The span at 8-41 (IQVEQKVPENVAKKTQRDSKLRDAVAKRRTERLA) shows a compositional bias: basic and acidic residues.

The protein belongs to the universal ribosomal protein uL30 family.

Functionally, binds to G-rich structures in 28S rRNA and in mRNAs. Plays a regulatory role in the translation apparatus; inhibits cell-free translation of mRNAs. The protein is Large ribosomal subunit protein uL30A (Rpl7-1) of Paramecium tetraurelia.